Reading from the N-terminus, the 499-residue chain is Pyruvate kinase 2 (499 aa).

Arg50 lines the substrate pocket. Positions 52, 54, 84, and 85 each coordinate K(+). 52 to 55 (NFSH) contributes to the ATP binding site. Arg91 is a binding site for ATP. Residue Glu241 participates in Mg(2+) binding. Substrate is bound by residues Gly264, Asp265, and Thr297. Mg(2+) is bound at residue Asp265.

Belongs to the pyruvate kinase family. As to quaternary structure, homotetramer. Mg(2+) is required as a cofactor. Requires K(+) as cofactor.

The catalysed reaction is pyruvate + ATP = phosphoenolpyruvate + ADP + H(+). The protein operates within carbohydrate degradation; glycolysis; pyruvate from D-glyceraldehyde 3-phosphate: step 5/5. Activated by fructose 2,6-bisphosphate, activated by the effector in a cooperative manner. This is Pyruvate kinase 2 (PYK2) from Trypanosoma brucei brucei.